Reading from the N-terminus, the 156-residue chain is Ribonuclease H (156 aa).

The 143-residue stretch at 2–144 (SQFDVTVFTD…CDVLARAQAS (143 aa)) folds into the RNase H type-1 domain. Mg(2+) contacts are provided by aspartate 11, glutamate 49, aspartate 71, and aspartate 136.

This sequence belongs to the RNase H family. In terms of assembly, monomer. Mg(2+) is required as a cofactor.

It localises to the cytoplasm. It carries out the reaction Endonucleolytic cleavage to 5'-phosphomonoester.. In terms of biological role, endonuclease that specifically degrades the RNA of RNA-DNA hybrids. The protein is Ribonuclease H of Nitratidesulfovibrio vulgaris (strain ATCC 29579 / DSM 644 / CCUG 34227 / NCIMB 8303 / VKM B-1760 / Hildenborough) (Desulfovibrio vulgaris).